The sequence spans 101 residues: Large ribosomal subunit protein uL23 (101 aa).

The protein belongs to the universal ribosomal protein uL23 family. As to quaternary structure, part of the 50S ribosomal subunit. Contacts protein L29, and trigger factor when it is bound to the ribosome.

In terms of biological role, one of the early assembly proteins it binds 23S rRNA. One of the proteins that surrounds the polypeptide exit tunnel on the outside of the ribosome. Forms the main docking site for trigger factor binding to the ribosome. The chain is Large ribosomal subunit protein uL23 from Rhodococcus jostii (strain RHA1).